Here is a 151-residue protein sequence, read N- to C-terminus: 3-dehydroquinate dehydratase (151 aa).

Catalysis depends on Y26, which acts as the Proton acceptor. Residues N75, H81, and D88 each contribute to the substrate site. The Proton donor role is filled by H101. Residues 102–103 (LS) and R112 each bind substrate.

Belongs to the type-II 3-dehydroquinase family. Homododecamer.

It catalyses the reaction 3-dehydroquinate = 3-dehydroshikimate + H2O. Its pathway is metabolic intermediate biosynthesis; chorismate biosynthesis; chorismate from D-erythrose 4-phosphate and phosphoenolpyruvate: step 3/7. Its function is as follows. Catalyzes a trans-dehydration via an enolate intermediate. This chain is 3-dehydroquinate dehydratase, found in Shewanella denitrificans (strain OS217 / ATCC BAA-1090 / DSM 15013).